The following is a 305-amino-acid chain: Ribonuclease BN (305 aa).

7 residues coordinate Zn(2+): His-64, His-66, Asp-68, His-69, His-141, Asp-212, and His-270. Asp-68 serves as the catalytic Proton acceptor.

This sequence belongs to the RNase Z family. RNase BN subfamily. In terms of assembly, homodimer. The cofactor is Zn(2+).

Zinc phosphodiesterase, which has both exoribonuclease and endoribonuclease activities. The sequence is that of Ribonuclease BN from Salmonella gallinarum (strain 287/91 / NCTC 13346).